Consider the following 451-residue polypeptide: UDP-N-acetylmuramoylalanine--D-glutamate ligase (451 aa).

Residue 116 to 122 (GTNGKTT) participates in ATP binding.

This sequence belongs to the MurCDEF family.

It localises to the cytoplasm. It catalyses the reaction UDP-N-acetyl-alpha-D-muramoyl-L-alanine + D-glutamate + ATP = UDP-N-acetyl-alpha-D-muramoyl-L-alanyl-D-glutamate + ADP + phosphate + H(+). The protein operates within cell wall biogenesis; peptidoglycan biosynthesis. In terms of biological role, cell wall formation. Catalyzes the addition of glutamate to the nucleotide precursor UDP-N-acetylmuramoyl-L-alanine (UMA). The polypeptide is UDP-N-acetylmuramoylalanine--D-glutamate ligase (Clostridioides difficile (strain 630) (Peptoclostridium difficile)).